The following is a 445-amino-acid chain: tRNA-2-methylthio-N(6)-dimethylallyladenosine synthase (445 aa).

In terms of domain architecture, MTTase N-terminal spans 3–124 (KKLYIKTYGC…LPELISKVVR (122 aa)). The [4Fe-4S] cluster site is built by cysteine 12, cysteine 48, cysteine 87, cysteine 162, cysteine 166, and cysteine 169. In terms of domain architecture, Radical SAM core spans 148–380 (YTQGASSFIS…QKELATQQLA (233 aa)). Residues 383–445 (ESCVGSTMKV…ALNSLTGEIL (63 aa)) enclose the TRAM domain.

This sequence belongs to the methylthiotransferase family. MiaB subfamily. In terms of assembly, monomer. The cofactor is [4Fe-4S] cluster.

It localises to the cytoplasm. It catalyses the reaction N(6)-dimethylallyladenosine(37) in tRNA + (sulfur carrier)-SH + AH2 + 2 S-adenosyl-L-methionine = 2-methylsulfanyl-N(6)-dimethylallyladenosine(37) in tRNA + (sulfur carrier)-H + 5'-deoxyadenosine + L-methionine + A + S-adenosyl-L-homocysteine + 2 H(+). Functionally, catalyzes the methylthiolation of N6-(dimethylallyl)adenosine (i(6)A), leading to the formation of 2-methylthio-N6-(dimethylallyl)adenosine (ms(2)i(6)A) at position 37 in tRNAs that read codons beginning with uridine. The polypeptide is tRNA-2-methylthio-N(6)-dimethylallyladenosine synthase (Rickettsia typhi (strain ATCC VR-144 / Wilmington)).